The sequence spans 216 residues: uncharacterized protein (216 aa).

The chain crosses the membrane as a helical span at residues 39–59 (VLPLTFIGSLLILILTIVYYF). A coiled-coil region spans residues 59–108 (FTLSGSVNELKNEISKEKSKKERLLSEIKRLEELKKTLETKKAIYEVVKI).

It is found in the membrane. This is an uncharacterized protein from Aquifex aeolicus (strain VF5).